The chain runs to 318 residues: tRNA U34 carboxymethyltransferase (318 aa).

Carboxy-S-adenosyl-L-methionine is bound by residues Lys-88, Trp-102, Lys-107, Gly-126, 176–177, Met-192, Tyr-196, and Arg-311; that span reads LE.

The protein belongs to the class I-like SAM-binding methyltransferase superfamily. CmoB family. In terms of assembly, homotetramer.

It carries out the reaction carboxy-S-adenosyl-L-methionine + 5-hydroxyuridine(34) in tRNA = 5-carboxymethoxyuridine(34) in tRNA + S-adenosyl-L-homocysteine + H(+). Catalyzes carboxymethyl transfer from carboxy-S-adenosyl-L-methionine (Cx-SAM) to 5-hydroxyuridine (ho5U) to form 5-carboxymethoxyuridine (cmo5U) at position 34 in tRNAs. In Pseudomonas putida (strain GB-1), this protein is tRNA U34 carboxymethyltransferase.